An 845-amino-acid polypeptide reads, in one-letter code: Alanine--tRNA ligase (845 aa).

Residues His-552, His-556, Cys-653, and His-657 each contribute to the Zn(2+) site.

This sequence belongs to the class-II aminoacyl-tRNA synthetase family. Requires Zn(2+) as cofactor.

It localises to the cytoplasm. The catalysed reaction is tRNA(Ala) + L-alanine + ATP = L-alanyl-tRNA(Ala) + AMP + diphosphate. Catalyzes the attachment of alanine to tRNA(Ala) in a two-step reaction: alanine is first activated by ATP to form Ala-AMP and then transferred to the acceptor end of tRNA(Ala). Also edits incorrectly charged Ser-tRNA(Ala) and Gly-tRNA(Ala) via its editing domain. The protein is Alanine--tRNA ligase of Campylobacter hominis (strain ATCC BAA-381 / DSM 21671 / CCUG 45161 / LMG 19568 / NCTC 13146 / CH001A).